The chain runs to 478 residues: tRNA(Ile)-lysidine synthase (478 aa).

Ser-27–Ser-32 contributes to the ATP binding site.

It belongs to the tRNA(Ile)-lysidine synthase family.

It localises to the cytoplasm. It catalyses the reaction cytidine(34) in tRNA(Ile2) + L-lysine + ATP = lysidine(34) in tRNA(Ile2) + AMP + diphosphate + H(+). In terms of biological role, ligates lysine onto the cytidine present at position 34 of the AUA codon-specific tRNA(Ile) that contains the anticodon CAU, in an ATP-dependent manner. Cytidine is converted to lysidine, thus changing the amino acid specificity of the tRNA from methionine to isoleucine. The sequence is that of tRNA(Ile)-lysidine synthase from Rickettsia rickettsii (strain Iowa).